We begin with the raw amino-acid sequence, 240 residues long: Biosynthetic peptidoglycan transglycosylase (240 aa).

A helical transmembrane segment spans residues 27-47 (VVLLFFFAVFALLLIFRFVPI).

The protein belongs to the glycosyltransferase 51 family.

It is found in the cell inner membrane. It catalyses the reaction [GlcNAc-(1-&gt;4)-Mur2Ac(oyl-L-Ala-gamma-D-Glu-L-Lys-D-Ala-D-Ala)](n)-di-trans,octa-cis-undecaprenyl diphosphate + beta-D-GlcNAc-(1-&gt;4)-Mur2Ac(oyl-L-Ala-gamma-D-Glu-L-Lys-D-Ala-D-Ala)-di-trans,octa-cis-undecaprenyl diphosphate = [GlcNAc-(1-&gt;4)-Mur2Ac(oyl-L-Ala-gamma-D-Glu-L-Lys-D-Ala-D-Ala)](n+1)-di-trans,octa-cis-undecaprenyl diphosphate + di-trans,octa-cis-undecaprenyl diphosphate + H(+). It functions in the pathway cell wall biogenesis; peptidoglycan biosynthesis. Peptidoglycan polymerase that catalyzes glycan chain elongation from lipid-linked precursors. This Haemophilus influenzae (strain PittEE) protein is Biosynthetic peptidoglycan transglycosylase.